Here is a 365-residue protein sequence, read N- to C-terminus: MSELRKRNQAAIADLSENIEVTETVELTEKKPETTKSTKGHIIDLIICVSGIYASFLTWAVLQERIATTPYGPDNKIFRASLVINTVQSFLAAAVGYAYLQYKQSRRAAKGLKKNTTVFDSMYTLKQLSLVALSQSLASPLSYTALKYVDYLTSILAKSCKLIPLMALQVTLYRRKFPAYKYAVVVLVTIGVSMFTIFHAAPKKASGAGSEHQLYGLGLLGISMLLDGLTNSTQDQIFRKNADITGPHVMCGLNLLTGVFTTVSLLTFSRPQLDTAIAFIRLHPEIMRDIVLFGLCGAVGQVFIFQTLEKFGSVVLVTVNVTRKMFSMLLSVVWFNHRLTLGQWAGVAAVFGGIGFEAWMKMKKN.

Helical transmembrane passes span 42–62 (IIDLIICVSGIYASFLTWAVL) and 80–100 (ASLVINTVQSFLAAAVGYAYL). An N-linked (GlcNAc...) asparagine glycan is attached at asparagine 115. The next 2 helical transmembrane spans lie at 182–202 (YAVVVLVTIGVSMFTIFHAAP) and 206–226 (SGAGSEHQLYGLGLLGISMLL). Asparagine 231 carries an N-linked (GlcNAc...) asparagine glycan. A run of 4 helical transmembrane segments spans residues 249 to 269 (VMCGLNLLTGVFTTVSLLTFS), 289 to 309 (DIVLFGLCGAVGQVFIFQTLE), 315 to 335 (VLVTVNVTRKMFSMLLSVVWF), and 339 to 359 (LTLGQWAGVAAVFGGIGFEAW).

Belongs to the nucleotide-sugar transporter family. SLC35B subfamily.

It is found in the endoplasmic reticulum membrane. Its function is as follows. May be involved in specific transport of UDP-Gal from the cytosol to the Golgi lumen. Involved in the maintenance of optimal conditions for the folding of secretory pathway proteins in the endoplasmic reticulum. This Yarrowia lipolytica (strain CLIB 122 / E 150) (Yeast) protein is UDP-galactose transporter homolog 1 (HUT1).